The chain runs to 24 residues: Hyaluronidase (24 aa).

Expressed by the venom gland.

Its subcellular location is the secreted. It carries out the reaction Random hydrolysis of (1-&gt;4)-linkages between N-acetyl-beta-D-glucosamine and D-glucuronate residues in hyaluronate.. Its function is as follows. Possesses high activity against hyaluronan in vitro. The polypeptide is Hyaluronidase (Tityus stigmurus (Brazilian scorpion)).